The primary structure comprises 23 residues: Protein YqfH (23 aa).

This chain is Protein YqfH, found in Escherichia coli (strain K12).